We begin with the raw amino-acid sequence, 598 residues long: Auxin response factor 22 (598 aa).

The segment at residues 124–226 (NSFTKVLTAS…ELRVGIRRAG (103 aa)) is a DNA-binding region (TF-B3). The 82-residue stretch at 509 to 590 (RTCTKVQMQG…MVKKILIFKR (82 aa)) folds into the PB1 domain.

The protein belongs to the ARF family. In terms of assembly, homodimers and heterodimers.

Its subcellular location is the nucleus. Its function is as follows. Auxin response factors (ARFs) are transcriptional factors that bind specifically to the DNA sequence 5'-TGTCTC-3' found in the auxin-responsive promoter elements (AuxREs). Could act as transcriptional activator or repressor. Formation of heterodimers with Aux/IAA proteins may alter their ability to modulate early auxin response genes expression. The sequence is that of Auxin response factor 22 (ARF22) from Arabidopsis thaliana (Mouse-ear cress).